A 45-amino-acid chain; its full sequence is Cytochrome b559 subunit beta (45 aa).

The helical transmembrane segment at 20 to 36 threads the bilayer; sequence WLAVHTLGVPTVFFLGA. Residue H24 participates in heme binding.

Belongs to the PsbE/PsbF family. In terms of assembly, heterodimer of an alpha subunit and a beta subunit. PSII is composed of 1 copy each of membrane proteins PsbA, PsbB, PsbC, PsbD, PsbE, PsbF, PsbH, PsbI, PsbJ, PsbK, PsbL, PsbM, PsbT, PsbX, PsbY, PsbZ, Psb30/Ycf12, peripheral proteins PsbO, CyanoQ (PsbQ), PsbU, PsbV and a large number of cofactors. It forms dimeric complexes. It depends on heme b as a cofactor.

Its subcellular location is the cellular thylakoid membrane. This b-type cytochrome is tightly associated with the reaction center of photosystem II (PSII). PSII is a light-driven water:plastoquinone oxidoreductase that uses light energy to abstract electrons from H(2)O, generating O(2) and a proton gradient subsequently used for ATP formation. It consists of a core antenna complex that captures photons, and an electron transfer chain that converts photonic excitation into a charge separation. This chain is Cytochrome b559 subunit beta, found in Nostoc punctiforme (strain ATCC 29133 / PCC 73102).